The following is a 65-amino-acid chain: uncharacterized protein (65 aa).

The protein to E.coli YjiX.

This is an uncharacterized protein from Escherichia coli O6:H1 (strain CFT073 / ATCC 700928 / UPEC).